Here is a 352-residue protein sequence, read N- to C-terminus: Ion-translocating oxidoreductase complex subunit D (352 aa).

Transmembrane regions (helical) follow at residues 20–40 (IMLL…WFFG), 42–62 (GTLV…ALVL), 89–109 (IPPL…VIIA), and 123–143 (PAMI…TSWL). Thr-187 carries the post-translational modification FMN phosphoryl threonine. Helical transmembrane passes span 214–234 (ILAG…GLWL), 242–262 (WHIP…GWLF), 267–287 (LAAP…FFIL), 301–321 (LIFG…GGYP), and 322–342 (DGVA…DYYT).

The protein belongs to the NqrB/RnfD family. As to quaternary structure, the complex is composed of six subunits: RsxA, RsxB, RsxC, RsxD, RsxE and RsxG. Requires FMN as cofactor.

The protein localises to the cell inner membrane. Functionally, part of a membrane-bound complex that couples electron transfer with translocation of ions across the membrane. Required to maintain the reduced state of SoxR. The polypeptide is Ion-translocating oxidoreductase complex subunit D (Shigella boydii serotype 18 (strain CDC 3083-94 / BS512)).